We begin with the raw amino-acid sequence, 225 residues long: 2-phytyl-1,4-naphtoquinone methyltransferase (225 aa).

Belongs to the class I-like SAM-binding methyltransferase superfamily. MenG/UbiE family.

The catalysed reaction is demethylphylloquinol + S-adenosyl-L-methionine = phylloquinol + S-adenosyl-L-homocysteine + H(+). It functions in the pathway cofactor biosynthesis; phylloquinone biosynthesis. In terms of biological role, methyltransferase required for the conversion of 2-phytyl-1,4-beta-naphthoquinol to phylloquinol. This Thermosynechococcus vestitus (strain NIES-2133 / IAM M-273 / BP-1) protein is 2-phytyl-1,4-naphtoquinone methyltransferase.